The following is a 188-amino-acid chain: Xanthine phosphoribosyltransferase (188 aa).

Residues Leu-20 and Asn-27 each coordinate xanthine. Residue 127 to 131 (AYGNA) participates in 5-phospho-alpha-D-ribose 1-diphosphate binding. Position 155 (Lys-155) interacts with xanthine.

Belongs to the purine/pyrimidine phosphoribosyltransferase family. Xpt subfamily. Homodimer.

It is found in the cytoplasm. The enzyme catalyses XMP + diphosphate = xanthine + 5-phospho-alpha-D-ribose 1-diphosphate. It participates in purine metabolism; XMP biosynthesis via salvage pathway; XMP from xanthine: step 1/1. In terms of biological role, converts the preformed base xanthine, a product of nucleic acid breakdown, to xanthosine 5'-monophosphate (XMP), so it can be reused for RNA or DNA synthesis. The polypeptide is Xanthine phosphoribosyltransferase (Parabacteroides distasonis (strain ATCC 8503 / DSM 20701 / CIP 104284 / JCM 5825 / NCTC 11152)).